The primary structure comprises 322 residues: Prephenate dehydratase (322 aa).

A Prephenate dehydratase domain is found at 5 to 191 (RIAYLGPEGT…ARTRFVLVGM (187 aa)). Residues 205–282 (SAVLRIDNAP…ADVCYLGSWP (78 aa)) form the ACT domain. The tract at residues 286–322 (ATGPTVSPPPPDEASRWLARLRAGKPDQASEPGGGKL) is disordered.

As to quaternary structure, homodimer.

It catalyses the reaction prephenate + H(+) = 3-phenylpyruvate + CO2 + H2O. It participates in amino-acid biosynthesis; L-phenylalanine biosynthesis; phenylpyruvate from prephenate: step 1/1. This is Prephenate dehydratase (pheA) from Mycobacterium leprae (strain Br4923).